The primary structure comprises 201 residues: Peroxiredoxin-2F, mitochondrial (201 aa).

Residues 1 to 30 (MAMSILKLRNLSALRSAANSARIGVSSRGF) constitute a mitochondrion transit peptide. The residue at position 37 (Thr37) is a Phosphothreonine. The 165-residue stretch at 37 to 201 (TDITSAAPGV…TGAEVILGQI (165 aa)) folds into the Thioredoxin domain. The Cysteine sulfenic acid (-SOH) intermediate role is filled by Cys89. Residue Ser149 is modified to Phosphoserine.

The protein belongs to the peroxiredoxin family. Prx5 subfamily. As to quaternary structure, monomer. Expressed in the whole plant.

The protein localises to the mitochondrion matrix. The catalysed reaction is [glutaredoxin]-dithiol + a hydroperoxide = [glutaredoxin]-disulfide + an alcohol + H2O. Its function is as follows. Thiol-specific peroxidase that catalyzes the reduction of hydrogen peroxide and organic hydroperoxides to water and alcohols, respectively. Plays a role in cell protection against oxidative stress by detoxifying peroxides. Reduces preferentially hydrogen peroxide rather than alkyl peroxides. May be involved in mitochondrial redox homeostasis. The polypeptide is Peroxiredoxin-2F, mitochondrial (PRXIIF) (Arabidopsis thaliana (Mouse-ear cress)).